Consider the following 444-residue polypeptide: Phosphoglucosamine mutase (444 aa).

The active-site Phosphoserine intermediate is the serine 102. The Mg(2+) site is built by serine 102, aspartate 241, aspartate 243, and aspartate 245. Serine 102 carries the post-translational modification Phosphoserine.

This sequence belongs to the phosphohexose mutase family. Requires Mg(2+) as cofactor. Post-translationally, activated by phosphorylation.

It carries out the reaction alpha-D-glucosamine 1-phosphate = D-glucosamine 6-phosphate. In terms of biological role, catalyzes the conversion of glucosamine-6-phosphate to glucosamine-1-phosphate. This is Phosphoglucosamine mutase from Haemophilus ducreyi (strain 35000HP / ATCC 700724).